We begin with the raw amino-acid sequence, 173 residues long: Large ribosomal subunit protein uL5 (173 aa).

Belongs to the universal ribosomal protein uL5 family. In terms of assembly, component of the large ribosomal subunit.

The protein resides in the nucleus. It localises to the cytoplasm. Functionally, component of the ribosome, a large ribonucleoprotein complex responsible for the synthesis of proteins in the cell. The small ribosomal subunit (SSU) binds messenger RNAs (mRNAs) and translates the encoded message by selecting cognate aminoacyl-transfer RNA (tRNA) molecules. The large subunit (LSU) contains the ribosomal catalytic site termed the peptidyl transferase center (PTC), which catalyzes the formation of peptide bonds, thereby polymerizing the amino acids delivered by tRNAs into a polypeptide chain. The nascent polypeptides leave the ribosome through a tunnel in the LSU and interact with protein factors that function in enzymatic processing, targeting, and the membrane insertion of nascent chains at the exit of the ribosomal tunnel. The chain is Large ribosomal subunit protein uL5 (RPL11) from Encephalitozoon cuniculi (strain GB-M1) (Microsporidian parasite).